The sequence spans 257 residues: 1-(5-phosphoribosyl)-5-[(5-phosphoribosylamino)methylideneamino] imidazole-4-carboxamide isomerase (257 aa).

Catalysis depends on aspartate 8, which acts as the Proton acceptor. The Proton donor role is filled by aspartate 129.

It belongs to the HisA/HisF family.

Its subcellular location is the cytoplasm. The catalysed reaction is 1-(5-phospho-beta-D-ribosyl)-5-[(5-phospho-beta-D-ribosylamino)methylideneamino]imidazole-4-carboxamide = 5-[(5-phospho-1-deoxy-D-ribulos-1-ylimino)methylamino]-1-(5-phospho-beta-D-ribosyl)imidazole-4-carboxamide. Its pathway is amino-acid biosynthesis; L-histidine biosynthesis; L-histidine from 5-phospho-alpha-D-ribose 1-diphosphate: step 4/9. This chain is 1-(5-phosphoribosyl)-5-[(5-phosphoribosylamino)methylideneamino] imidazole-4-carboxamide isomerase, found in Trichodesmium erythraeum (strain IMS101).